Here is a 152-residue protein sequence, read N- to C-terminus: Large ribosomal subunit protein uL13 (152 aa).

A disordered region spans residues 133-152 (EHPHQAQKPQPLTINTIPGA). The span at 139 to 152 (QKPQPLTINTIPGA) shows a compositional bias: polar residues.

Belongs to the universal ribosomal protein uL13 family. In terms of assembly, part of the 50S ribosomal subunit.

This protein is one of the early assembly proteins of the 50S ribosomal subunit, although it is not seen to bind rRNA by itself. It is important during the early stages of 50S assembly. The protein is Large ribosomal subunit protein uL13 of Thermosynechococcus vestitus (strain NIES-2133 / IAM M-273 / BP-1).